Consider the following 631-residue polypeptide: Phosphomethylpyrimidine synthase (631 aa).

Substrate is bound by residues N239, M268, Y297, H333, 353–355, 394–397, and E433; these read SRG and DGLR. H437 is a Zn(2+) binding site. Y460 lines the substrate pocket. H501 contacts Zn(2+). Residues C581, C584, and C589 each contribute to the [4Fe-4S] cluster site.

The protein belongs to the ThiC family. As to quaternary structure, homodimer. [4Fe-4S] cluster serves as cofactor.

It catalyses the reaction 5-amino-1-(5-phospho-beta-D-ribosyl)imidazole + S-adenosyl-L-methionine = 4-amino-2-methyl-5-(phosphooxymethyl)pyrimidine + CO + 5'-deoxyadenosine + formate + L-methionine + 3 H(+). It participates in cofactor biosynthesis; thiamine diphosphate biosynthesis. Functionally, catalyzes the synthesis of the hydroxymethylpyrimidine phosphate (HMP-P) moiety of thiamine from aminoimidazole ribotide (AIR) in a radical S-adenosyl-L-methionine (SAM)-dependent reaction. This is Phosphomethylpyrimidine synthase from Shigella flexneri serotype 5b (strain 8401).